The chain runs to 336 residues: tRNA-dihydrouridine(20/20a) synthase (336 aa).

Residues 24–26 and glutamine 77 each bind FMN; that span reads PMM. Cysteine 107 serves as the catalytic Proton donor. Residues lysine 146, histidine 178, 218–220, and 240–241 each bind FMN; these read NGG and GR.

This sequence belongs to the Dus family. DusA subfamily. It depends on FMN as a cofactor.

The enzyme catalyses 5,6-dihydrouridine(20) in tRNA + NADP(+) = uridine(20) in tRNA + NADPH + H(+). The catalysed reaction is 5,6-dihydrouridine(20) in tRNA + NAD(+) = uridine(20) in tRNA + NADH + H(+). It carries out the reaction 5,6-dihydrouridine(20a) in tRNA + NADP(+) = uridine(20a) in tRNA + NADPH + H(+). It catalyses the reaction 5,6-dihydrouridine(20a) in tRNA + NAD(+) = uridine(20a) in tRNA + NADH + H(+). Functionally, catalyzes the synthesis of 5,6-dihydrouridine (D), a modified base found in the D-loop of most tRNAs, via the reduction of the C5-C6 double bond in target uridines. Specifically modifies U20 and U20a in tRNAs. The polypeptide is tRNA-dihydrouridine(20/20a) synthase (Pseudomonas putida (strain ATCC 47054 / DSM 6125 / CFBP 8728 / NCIMB 11950 / KT2440)).